Consider the following 1287-residue polypeptide: DNA-directed RNA polymerase subunit beta (1287 aa).

Belongs to the RNA polymerase beta chain family. The RNAP catalytic core consists of 2 alpha, 1 beta, 1 beta' and 1 omega subunit. When a sigma factor is associated with the core the holoenzyme is formed, which can initiate transcription.

The catalysed reaction is RNA(n) + a ribonucleoside 5'-triphosphate = RNA(n+1) + diphosphate. DNA-dependent RNA polymerase catalyzes the transcription of DNA into RNA using the four ribonucleoside triphosphates as substrates. The protein is DNA-directed RNA polymerase subunit beta of Mycoplasma capricolum subsp. capricolum (strain California kid / ATCC 27343 / NCTC 10154).